We begin with the raw amino-acid sequence, 528 residues long: Protein arginine N-methyltransferase 3 (528 aa).

The segment at 1–42 (MCSLAAGNGQGAELGPEPLELSDSGDDAGWEDEDADAEPAQG) is disordered. Cys-2 carries the post-translational modification N-acetylcysteine. A phosphoserine mark is found at Ser-22 and Ser-24. Positions 23-37 (DSGDDAGWEDEDADA) are enriched in acidic residues. Residues 46–69 (TPCLFCDRLFRSAEETFSHCKLEH) form a C2H2-type zinc finger. The residue at position 169 (Ser-169) is a Phosphoserine. Residues 184–528 (MKQFAQDFVM…NSSTQTYSLQ (345 aa)) form a mediates interaction with ALDH1A1 region. Residues 214–528 (DGVYFSSYGH…NSSTQTYSLQ (315 aa)) enclose the SAM-dependent MTase PRMT-type domain. Positions 236, 260, 282, 284, 310, and 311 each coordinate S-adenosyl-L-homocysteine. Active-site residues include Glu-326 and Glu-335.

This sequence belongs to the class I-like SAM-binding methyltransferase superfamily. Protein arginine N-methyltransferase family. In terms of assembly, monomer and homodimer. Interacts with EPB41L3 (via FERM domain); the interaction is direct and inhibits the protein-arginine N-methyltransferase activity of PRMT3. Interacts with the 40S ribosomal protein RPS2. Interacts with ALDH1A1; the interaction is direct, inhibits ALDH1A1 aldehyde dehydrogenase activity and is independent of the methyltransferase activity of PRMT3. As to expression, ubiquitously expressed.

Its subcellular location is the cytoplasm. The protein localises to the cytosol. It localises to the nucleus. The enzyme catalyses L-arginyl-[protein] + S-adenosyl-L-methionine = N(omega)-methyl-L-arginyl-[protein] + S-adenosyl-L-homocysteine + H(+). It catalyses the reaction L-arginyl-[protein] + 2 S-adenosyl-L-methionine = N(omega),N(omega)-dimethyl-L-arginyl-[protein] + 2 S-adenosyl-L-homocysteine + 2 H(+). Its activity is regulated as follows. Inhibited by N-ethylmaleimide and high concentrations of zinc chloride. Functionally, protein-arginine N-methyltransferase that catalyzes both the monomethylation and asymmetric dimethylation of the guanidino nitrogens of arginine residues in target proteins, and therefore falls into the group of type I methyltransferases. Catalyzes the asymmetric arginine dimethylation at multiple sites in the Arg/Gly-rich region of small ribosomal subunit protein uS5/RPS2. Also appears to methylate other ribosomal proteins. May regulate retinoic acid synthesis and signaling by inhibiting ALDH1A1 retinal dehydrogenase activity. Contributes to methylation of histone H4 'Arg-3', a specific tag for epigenetic transcriptional activation. Promotes osteogenesis. The polypeptide is Protein arginine N-methyltransferase 3 (Rattus norvegicus (Rat)).